The following is a 334-amino-acid chain: Mucin-15 (334 aa).

A signal peptide spans 1–23 (MLALAKILLISTLFYSLLSGSHG). Residues 24–236 (KENQDINTTQ…SDPQKENRNT (213 aa)) are Extracellular-facing. 9 N-linked (GlcNAc...) asparagine glycosylation sites follow: Asn30, Asn61, Asn79, Asn90, Asn148, Asn155, Asn163, Asn218, and Asn225. The interval 64–104 (TSNLKASHSPPLNLPNNSHGITDFSSNSSAEHSLGSLKPTS) is disordered. The span at 77–94 (LPNNSHGITDFSSNSSAE) shows a compositional bias: polar residues. The chain crosses the membrane as a helical span at residues 237 to 257 (GIVFGAILGAILGVSLLTLVG). Residues 258–334 (YLLCGKRKTD…DDIPPLRTSV (77 aa)) are Cytoplasmic-facing. Residues 304 to 334 (PTLNDSAMPESEENARDGIPMDDIPPLRTSV) are disordered.

In terms of processing, highly glycosylated (N- and O-linked carbohydrates). In terms of tissue distribution, expressed in spleen, thymus, prostate, testis, ovary, small intestine, colon, peripheral blood leukocyte, bone marrow, lymph node and lung.

The protein localises to the cell membrane. The protein resides in the secreted. Its function is as follows. May play a role in the cell adhesion to the extracellular matrix. In Homo sapiens (Human), this protein is Mucin-15 (MUC15).